A 314-amino-acid chain; its full sequence is tRNA dimethylallyltransferase (314 aa).

40 to 47 lines the ATP pocket; it reads GPTASGKS. 42 to 47 serves as a coordination point for substrate; that stretch reads TASGKS.

The protein belongs to the IPP transferase family. As to quaternary structure, monomer. Mg(2+) serves as cofactor.

The enzyme catalyses adenosine(37) in tRNA + dimethylallyl diphosphate = N(6)-dimethylallyladenosine(37) in tRNA + diphosphate. Its function is as follows. Catalyzes the transfer of a dimethylallyl group onto the adenine at position 37 in tRNAs that read codons beginning with uridine, leading to the formation of N6-(dimethylallyl)adenosine (i(6)A). In Cereibacter sphaeroides (strain KD131 / KCTC 12085) (Rhodobacter sphaeroides), this protein is tRNA dimethylallyltransferase.